A 372-amino-acid polypeptide reads, in one-letter code: Actin-related protein 2/3 complex subunit 1B (372 aa).

WD repeat units follow at residues 6 to 45, 50 to 89, 94 to 135, 140 to 179, 242 to 280, and 324 to 367; these read FLVE…WTKV, EHNG…WKPT, RINR…WVCK, PIRS…VEER, SETL…GMLS, and LHKN…SALK.

The protein belongs to the WD repeat ARPC1 family. As to quaternary structure, component of the Arp2/3 complex composed of ACTR2/ARP2, ACTR3/ARP3, ARPC1B/p41-ARC, ARPC2/p34-ARC, ARPC3/p21-ARC, ARPC4/p20-ARC and ARPC5/p16-ARC.

It localises to the cytoplasm. It is found in the cytoskeleton. The protein resides in the nucleus. In terms of biological role, component of the Arp2/3 complex, a multiprotein complex that mediates actin polymerization upon stimulation by nucleation-promoting factor (NPF). The Arp2/3 complex mediates the formation of branched actin networks in the cytoplasm, providing the force for cell motility. In addition to its role in the cytoplasmic cytoskeleton, the Arp2/3 complex also promotes actin polymerization in the nucleus, thereby regulating gene transcription and repair of damaged DNA. The Arp2/3 complex promotes homologous recombination (HR) repair in response to DNA damage by promoting nuclear actin polymerization, leading to drive motility of double-strand breaks (DSBs). This chain is Actin-related protein 2/3 complex subunit 1B, found in Homo sapiens (Human).